The sequence spans 389 residues: Na(+)/H(+) antiporter NhaA 1 (389 aa).

A run of 12 helical transmembrane segments spans residues 12–32, 62–82, 97–117, 128–148, 157–177, 184–204, 220–240, 260–280, 282–302, 305–325, 331–351, and 365–385; these read VLNEAFGGVLLIVCTLLALLV, FLLWINDGLISIFFFAIGLEL, IVLPFMAALGGILIPAMLFVL, GWAIPTATDTAFALAILMMCG, IFLLSLAIFDDVGAILIIAIF, IVAFVVAGIAILAMLVLNILG, ISVLKSGVHATLAGIITAFFI, FWLAFVILPLFAFANAGVNLS, IDIGAIFSGVSVGIFLGLFVG, AGVFLFSYLAIRFKFAALPQG, LYGVCILTGIGFTMSLFIDGL, and LAILIASFCSGIWGFIYLKFF.

This sequence belongs to the NhaA Na(+)/H(+) (TC 2.A.33) antiporter family.

Its subcellular location is the cell inner membrane. The catalysed reaction is Na(+)(in) + 2 H(+)(out) = Na(+)(out) + 2 H(+)(in). In terms of biological role, na(+)/H(+) antiporter that extrudes sodium in exchange for external protons. This Campylobacter jejuni subsp. jejuni serotype O:23/36 (strain 81-176) protein is Na(+)/H(+) antiporter NhaA 1.